The following is a 76-amino-acid chain: Frizzled-3 (76 aa).

Residues 1 to 5 (YPERP) lie on the Cytoplasmic side of the membrane. A helical transmembrane segment spans residues 6-26 (IIFYAVCYMMVSLIFFIGFLL). Residues 27-54 (EDRVACNASSPAQYKASTVTQGSHNKAC) are Extracellular-facing. Residue N33 is glycosylated (N-linked (GlcNAc...) asparagine). The helical transmembrane segment at 55–75 (TMLFMVLYFFTMAGSVWWVIL) threads the bilayer. Position 76 (R76) is a topological domain, cytoplasmic.

The protein belongs to the G-protein coupled receptor Fz/Smo family.

The protein resides in the membrane. Its subcellular location is the cell membrane. It localises to the cell surface. The protein localises to the apical cell membrane. Functionally, receptor for Wnt proteins. Most of frizzled receptors are coupled to the beta-catenin canonical signaling pathway, which leads to the activation of disheveled proteins, inhibition of GSK-3 kinase, nuclear accumulation of beta-catenin and activation of Wnt target genes. A second signaling pathway involving PKC and calcium fluxes has been seen for some family members, but it is not yet clear if it represents a distinct pathway or if it can be integrated in the canonical pathway, as PKC seems to be required for Wnt-mediated inactivation of GSK-3 kinase. Both pathways seem to involve interactions with G-proteins. May be involved in transduction and intercellular transmission of polarity information during tissue morphogenesis and/or in differentiated tissues. Plays a role in controlling early axon growth and guidance processes necessary for the formation of a subset of central and peripheral major fiber tracts. Involved in the migration of cranial neural crest cells. May also be implicated in the transmission of sensory information from the trunk and limbs to the brain. Controls commissural sensory axons guidance after midline crossing along the anterior-posterior axis in the developing spinal cord in a Wnt-dependent signaling pathway. Together with FZD6, is involved in the neural tube closure and plays a role in the regulation of the establishment of planar cell polarity (PCP). Promotes neurogenesis by maintaining sympathetic neuroblasts within the cell cycle in a beta-catenin-dependent manner. The chain is Frizzled-3 (FZD3) from Gallus gallus (Chicken).